The following is a 188-amino-acid chain: HGPRTase-like protein 1 (188 aa).

The protein belongs to the purine/pyrimidine phosphoribosyltransferase family. Archaeal HPRT subfamily.

May catalyze a purine salvage reaction, the substrate is unknown. This chain is HGPRTase-like protein 1, found in Haloferax volcanii (strain ATCC 29605 / DSM 3757 / JCM 8879 / NBRC 14742 / NCIMB 2012 / VKM B-1768 / DS2) (Halobacterium volcanii).